Consider the following 377-residue polypeptide: Pseudouridylate synthase RPUSD4, mitochondrial (377 aa).

The transit peptide at 1–35 (MAAPLLGSPGLQVLSMSSRTGKLFTPSSRSFCSRA) directs the protein to the mitochondrion. The active site involves Asp-153.

Belongs to the pseudouridine synthase RluA family. In terms of assembly, interacts with 16S mt-rRNA, mt-tRNA(Phe) and mt-tRNA(Met). Forms a regulatory protein-RNA complex, consisting of RCC1L, NGRN, RPUSD3, RPUSD4, TRUB2, FASTKD2 and 16S mt-rRNA.

The protein localises to the mitochondrion matrix. Its subcellular location is the nucleus. It is found in the cytoplasm. It carries out the reaction uridine in 5S rRNA = pseudouridine in 5S rRNA. The enzyme catalyses a uridine in tRNA = a pseudouridine in tRNA. The catalysed reaction is a uridine in mRNA = a pseudouridine in mRNA. Catalyzes uridine to pseudouridine isomerization (pseudouridylation) of different mitochondrial RNA substrates. Acts on position 1397 in 16S mitochondrial ribosomal RNA (16S mt-rRNA). This modification is required for the assembly of 16S mt-rRNA into a functional mitochondrial ribosome. As a component of a functional protein-RNA module, consisting of RCC1L, NGRN, RPUSD3, RPUSD4, TRUB2, FASTKD2 and 16S mt-rRNA, controls 16S mt-rRNA abundance and is required for intra-mitochondrial translation. Acts on position 39 in mitochondrial tRNA(Phe). Also catalyzes pseudouridylation of mRNAs in nucleus: acts as a regulator of pre-mRNA splicing by mediating pseudouridylation of pre-mRNAs at locations associated with alternatively spliced regions. Pseudouridylation of pre-mRNAs near splice sites directly regulates mRNA splicing and mRNA 3'-end processing. This is Pseudouridylate synthase RPUSD4, mitochondrial from Rattus norvegicus (Rat).